We begin with the raw amino-acid sequence, 303 residues long: Coenzyme PQQ synthesis protein B (303 aa).

The protein belongs to the PqqB family.

It participates in cofactor biosynthesis; pyrroloquinoline quinone biosynthesis. Functionally, may be involved in the transport of PQQ or its precursor to the periplasm. The sequence is that of Coenzyme PQQ synthesis protein B from Pseudomonas savastanoi pv. phaseolicola (strain 1448A / Race 6) (Pseudomonas syringae pv. phaseolicola (strain 1448A / Race 6)).